The following is a 570-amino-acid chain: Urease subunit alpha (570 aa).

Residues 131–570 (GGMDSHIHFI…LPMAQRYFLF (440 aa)) enclose the Urease domain. The Ni(2+) site is built by His-136, His-138, and Lys-219. Lys-219 is subject to N6-carboxylysine. His-221 contributes to the substrate binding site. Ni(2+) contacts are provided by His-248 and His-274. His-322 functions as the Proton donor in the catalytic mechanism. A Ni(2+)-binding site is contributed by Asp-362.

The protein belongs to the metallo-dependent hydrolases superfamily. Urease alpha subunit family. In terms of assembly, heterotrimer of UreA (gamma), UreB (beta) and UreC (alpha) subunits. Three heterotrimers associate to form the active enzyme. Ni cation is required as a cofactor. In terms of processing, carboxylation allows a single lysine to coordinate two nickel ions.

The protein resides in the cytoplasm. It carries out the reaction urea + 2 H2O + H(+) = hydrogencarbonate + 2 NH4(+). It participates in nitrogen metabolism; urea degradation; CO(2) and NH(3) from urea (urease route): step 1/1. The protein is Urease subunit alpha of Rhizobium johnstonii (strain DSM 114642 / LMG 32736 / 3841) (Rhizobium leguminosarum bv. viciae).